A 382-amino-acid chain; its full sequence is MKALHFGAGNIGRGFIGKLLADAGIQLTFADVNQVVLDALNARHSYQVHVVGENEQVDTVSGVNAVSSIGDDVVDLIAHVDLITTAVGPVVLERIAPAIAKGLAKRKAQGVDAPLNIIACENMVRGTTQLKGHVMNALADGDKAWVEQHVGFVDSAVDRIVPPSASATHDPLEVTVETFSEWIVDKTQFKGALPNIPGMELTDNLMAFVERKLFTLNTGHAITAYLGKLAGHQTIRDAILDESIRAVVKGAMEESGAVLIKRYGFDADKHAAYIQKILGRFENPYLKDDVERVGRQPLRKLSAGDRLIKPLLGTLEYGLPHVNLVKGIAAAMHFRSDEDPQAQELAALITEKGPQAALAQISGLDANSDVVAEAVNAYNATK.

3–14 (ALHFGAGNIGRG) is a binding site for NAD(+).

Belongs to the mannitol dehydrogenase family.

It carries out the reaction D-mannitol 1-phosphate + NAD(+) = beta-D-fructose 6-phosphate + NADH + H(+). This chain is Mannitol-1-phosphate 5-dehydrogenase, found in Salmonella enteritidis PT4 (strain P125109).